The primary structure comprises 501 residues: Lysine--tRNA ligase (501 aa).

Positions 412 and 419 each coordinate Mg(2+).

The protein belongs to the class-II aminoacyl-tRNA synthetase family. Homodimer. Requires Mg(2+) as cofactor.

Its subcellular location is the cytoplasm. It catalyses the reaction tRNA(Lys) + L-lysine + ATP = L-lysyl-tRNA(Lys) + AMP + diphosphate. The sequence is that of Lysine--tRNA ligase (lysS) from Pasteurella multocida (strain Pm70).